The primary structure comprises 388 residues: Mannitol-1-phosphate 5-dehydrogenase (388 aa).

NAD(+) is bound at residue 5–16 (AIQFGGGNIGRG). Residue Lys213 is part of the active site.

It belongs to the mannitol dehydrogenase family. As to quaternary structure, monomer.

The catalysed reaction is D-mannitol 1-phosphate + NAD(+) = beta-D-fructose 6-phosphate + NADH + H(+). Catalyzes the NAD(H)-dependent interconversion of D-fructose 6-phosphate and D-mannitol 1-phosphate in the mannitol metabolic pathway. Has a strong preference for NADH over NADPH. Required for protection of conidiospores against exogenous stresses such as high temperatures and an oxidative environment. This Aspergillus niger protein is Mannitol-1-phosphate 5-dehydrogenase (mpdA).